We begin with the raw amino-acid sequence, 713 residues long: Polyribonucleotide nucleotidyltransferase (713 aa).

Residues Asp485 and Asp491 each coordinate Mg(2+). In terms of domain architecture, KH spans 552–611; it reads PRIYTMKIDPKKIKDVIGKGGATVRSLTEETGTSIDIDDDGTVKIAAVDKNAVQEVMSRI. The S1 motif domain occupies 621–689; the sequence is GVVYKGKVTR…RQGRIRLTMK (69 aa). A disordered region spans residues 694–713; the sequence is DQTKNEENLLQSEEGSPVQE. Over residues 701–713 the composition is skewed to polar residues; the sequence is NLLQSEEGSPVQE.

It belongs to the polyribonucleotide nucleotidyltransferase family. As to quaternary structure, component of the RNA degradosome, which is a multiprotein complex involved in RNA processing and mRNA degradation. Mg(2+) is required as a cofactor.

The protein resides in the cytoplasm. The enzyme catalyses RNA(n+1) + phosphate = RNA(n) + a ribonucleoside 5'-diphosphate. Functionally, involved in mRNA degradation. Catalyzes the phosphorolysis of single-stranded polyribonucleotides processively in the 3'- to 5'-direction. This is Polyribonucleotide nucleotidyltransferase from Histophilus somni (strain 2336) (Haemophilus somnus).